The sequence spans 196 residues: Endoribonuclease YbeY (196 aa).

Residues His120, His124, and His130 each contribute to the Zn(2+) site.

The protein belongs to the endoribonuclease YbeY family. It depends on Zn(2+) as a cofactor.

It is found in the cytoplasm. In terms of biological role, single strand-specific metallo-endoribonuclease involved in late-stage 70S ribosome quality control and in maturation of the 3' terminus of the 16S rRNA. The protein is Endoribonuclease YbeY of Corynebacterium glutamicum (strain ATCC 13032 / DSM 20300 / JCM 1318 / BCRC 11384 / CCUG 27702 / LMG 3730 / NBRC 12168 / NCIMB 10025 / NRRL B-2784 / 534).